Consider the following 159-residue polypeptide: Large ribosomal subunit protein uL15 (159 aa).

Positions 1–13 are enriched in basic and acidic residues; it reads MRLNELRDNDGAT. The disordered stretch occupies residues 1–41; that stretch reads MRLNELRDNDGATKIRTRVGRGIGSGKGKTGGRGVKGQKSR. Over residues 21–35 the composition is skewed to gly residues; that stretch reads RGIGSGKGKTGGRGV.

Belongs to the universal ribosomal protein uL15 family. Part of the 50S ribosomal subunit.

Binds to the 23S rRNA. This chain is Large ribosomal subunit protein uL15, found in Maricaulis maris (strain MCS10) (Caulobacter maris).